The sequence spans 815 residues: Minichromosome loss protein 1 (815 aa).

5 WD repeats span residues 11 to 50, 53 to 90, 93 to 132, 135 to 174, and 228 to 267; these read AHTDGLTRLAYTRDGKFLLTVGSNQVIRKFQVGSDEEPDS, NHQDPITGIAVAENYFCTCSEDATVCVYPIDSPTEHTL, RTTLPIRDVAYSVDGNWIAIASDETAVKVVSSTDSSQIFS, PAKASNKHVTYSPNGNFLAVSSCNGILYFYDTQTRELIKF, and ENHSGVTDISWSSNGMYIAASFKKGGILIWDTQSHEVVVE. Residues 306 to 362 form a disordered region; that stretch reads LKEENDPTKPLTSSKSKNRTSKELDDLFGSDDEQSQNVNDLDGNSANEENEFINHDG. A compositionally biased stretch (polar residues) spans 340 to 352; it reads SQNVNDLDGNSAN. The stretch at 517–553 is one WD 6 repeat; that stretch reads ENESPVTISLSSSVVLVCTSAGYVRVFSRQGFPISIH.

Interacts with pof3 and pol1.

The protein resides in the nucleus. It is found in the chromosome. Its function is as follows. Has a role in regulating DNA replication complexes. Acts as a regulator of post DNA replication initiation. Associates with chromatin during G1 and S phases of mitosis. Required for the transcriptional repression of the outer repeats of the centromeric region. Acts as a polymerase alpha replication accessory factor and is important for S-phase DNA damage survival. Plays a role in lagging-strand synthesis and Ozaki fragment processing, in addition to DNA repair. This Schizosaccharomyces pombe (strain 972 / ATCC 24843) (Fission yeast) protein is Minichromosome loss protein 1 (mcl1).